Reading from the N-terminus, the 368-residue chain is Putative agmatine deiminase (368 aa).

C359 acts as the Amidino-cysteine intermediate in catalysis.

The protein belongs to the agmatine deiminase family.

The enzyme catalyses agmatine + H2O = N-carbamoylputrescine + NH4(+). The chain is Putative agmatine deiminase from Pectobacterium atrosepticum (strain SCRI 1043 / ATCC BAA-672) (Erwinia carotovora subsp. atroseptica).